Consider the following 148-residue polypeptide: MPIGELAIGAVLGVGAQAIYDRFRKARDISFVHRLCATILSIEPFLVQIDKRSKVEGSPLREVNERLTCFLELAYVFVEAYPKLRRRQVLRKYRYIKAIETIELALRSIIVVDFQVDQWDDIKEIKAKISEMDTKLAEVISACSKIRA.

An RPW8 domain is found at Met1–Ala148. A helical membrane pass occupies residues Ala7–Phe23. The stretch at Asp120 to Ile140 forms a coiled coil.

It belongs to the plant RPW8 protein family.

It is found in the membrane. Disease resistance (R) protein that induces localized, salicylic acid-dependent defenses. Confers resistance to powdery mildew (e.g. Erysiphe cichoracearum UCSC1). In Arabidopsis thaliana (Mouse-ear cress), this protein is Protein RESISTANCE TO POWDERY MILDEW 8.1.